The chain runs to 89 residues: Small ribosomal subunit protein uS14A (89 aa).

Belongs to the universal ribosomal protein uS14 family. As to quaternary structure, part of the 30S ribosomal subunit. Contacts proteins S3 and S10.

Its function is as follows. Binds 16S rRNA, required for the assembly of 30S particles and may also be responsible for determining the conformation of the 16S rRNA at the A site. The protein is Small ribosomal subunit protein uS14A of Oceanobacillus iheyensis (strain DSM 14371 / CIP 107618 / JCM 11309 / KCTC 3954 / HTE831).